A 369-amino-acid chain; its full sequence is GTPase Obg (369 aa).

Residues 1–158 (MFTDVVELTV…RRIKLDLKLI (158 aa)) form the Obg domain. Residues 126-146 (NTHFKSSTNQRPTYAQPGEKG) are disordered. Over residues 128 to 138 (HFKSSTNQRPT) the composition is skewed to polar residues. Residues 159–362 (ADVGLVGFPN…LKHALFNLVQ (204 aa)) form the OBG-type G domain. Residues 165–172 (GFPNVGKS), 190–194 (FTTLT), 212–215 (DIPG), 280–283 (TRAD), and 343–345 (SSA) contribute to the GTP site. Mg(2+)-binding residues include serine 172 and threonine 192.

The protein belongs to the TRAFAC class OBG-HflX-like GTPase superfamily. OBG GTPase family. Monomer. It depends on Mg(2+) as a cofactor.

The protein resides in the cytoplasm. Functionally, an essential GTPase which binds GTP, GDP and possibly (p)ppGpp with moderate affinity, with high nucleotide exchange rates and a fairly low GTP hydrolysis rate. Plays a role in control of the cell cycle, stress response, ribosome biogenesis and in those bacteria that undergo differentiation, in morphogenesis control. In Sulfurimonas denitrificans (strain ATCC 33889 / DSM 1251) (Thiomicrospira denitrificans (strain ATCC 33889 / DSM 1251)), this protein is GTPase Obg.